The sequence spans 256 residues: Protein FixA (256 aa).

The protein belongs to the ETF beta-subunit/FixA family. Heterodimer of FixA and FixB.

Its pathway is amine and polyamine metabolism; carnitine metabolism. Functionally, required for anaerobic carnitine reduction. May bring reductant to CaiA. This chain is Protein FixA, found in Escherichia coli O81 (strain ED1a).